The primary structure comprises 285 residues: HTH-type transcriptional regulator MurR (285 aa).

Residues 1-77 form the HTH rpiR-type domain; the sequence is MLYLTKIRNA…MALIGEYSAS (77 aa). The segment at residues 37-56 is a DNA-binding region (H-T-H motif); the sequence is SRKMAKQLGISQSSIVKFAQ. An SIS domain is found at 128-268; sequence IIEVISKAPF…FVGLVQLNDV (141 aa).

In terms of assembly, homotetramer.

It participates in amino-sugar metabolism; N-acetylmuramate degradation [regulation]. Functionally, represses the expression of the murPQ operon involved in the uptake and degradation of N-acetylmuramic acid (MurNAc). Binds to two adjacent inverted repeats within the operator region. MurNAc 6-phosphate, the substrate of MurQ, is the specific inducer that weakens binding of MurR to the operator. The polypeptide is HTH-type transcriptional regulator MurR (Shigella sonnei (strain Ss046)).